We begin with the raw amino-acid sequence, 193 residues long: Peptidyl-tRNA hydrolase (193 aa).

Y16 is a binding site for tRNA. Catalysis depends on H21, which acts as the Proton acceptor. The tRNA site is built by F67, N69, and N115.

This sequence belongs to the PTH family. Monomer.

The protein resides in the cytoplasm. It carries out the reaction an N-acyl-L-alpha-aminoacyl-tRNA + H2O = an N-acyl-L-amino acid + a tRNA + H(+). Hydrolyzes ribosome-free peptidyl-tRNAs (with 1 or more amino acids incorporated), which drop off the ribosome during protein synthesis, or as a result of ribosome stalling. In terms of biological role, catalyzes the release of premature peptidyl moieties from peptidyl-tRNA molecules trapped in stalled 50S ribosomal subunits, and thus maintains levels of free tRNAs and 50S ribosomes. The polypeptide is Peptidyl-tRNA hydrolase (Psychrobacter cryohalolentis (strain ATCC BAA-1226 / DSM 17306 / VKM B-2378 / K5)).